Consider the following 168-residue polypeptide: Crossover junction endodeoxyribonuclease RuvC (168 aa).

Active-site residues include D11, E71, and D144. The Mg(2+) site is built by D11, E71, and D144.

Belongs to the RuvC family. As to quaternary structure, homodimer which binds Holliday junction (HJ) DNA. The HJ becomes 2-fold symmetrical on binding to RuvC with unstacked arms; it has a different conformation from HJ DNA in complex with RuvA. In the full resolvosome a probable DNA-RuvA(4)-RuvB(12)-RuvC(2) complex forms which resolves the HJ. Mg(2+) serves as cofactor.

The protein resides in the cytoplasm. The enzyme catalyses Endonucleolytic cleavage at a junction such as a reciprocal single-stranded crossover between two homologous DNA duplexes (Holliday junction).. Its function is as follows. The RuvA-RuvB-RuvC complex processes Holliday junction (HJ) DNA during genetic recombination and DNA repair. Endonuclease that resolves HJ intermediates. Cleaves cruciform DNA by making single-stranded nicks across the HJ at symmetrical positions within the homologous arms, yielding a 5'-phosphate and a 3'-hydroxyl group; requires a central core of homology in the junction. The consensus cleavage sequence is 5'-(A/T)TT(C/G)-3'. Cleavage occurs on the 3'-side of the TT dinucleotide at the point of strand exchange. HJ branch migration catalyzed by RuvA-RuvB allows RuvC to scan DNA until it finds its consensus sequence, where it cleaves and resolves the cruciform DNA. The chain is Crossover junction endodeoxyribonuclease RuvC from Protochlamydia amoebophila (strain UWE25).